The sequence spans 334 residues: MAPEISVNPMYLSEKAHQAPPRRAYVTFLAGNGDYVKGVVGLAKGLRKVKSAYPLVVAMLPDVPEEHREILRSQGCVVREIEPVYPPDNQVEFAMAYYVLNYSKLRIWNFEEYSKMIYLDADIQVFDNIDHLFDLSDAYFYAVMDCFCEKTWSHSLQYSIGYCQQCPEKVTWPEDMESPPPPLYFNAGMFVFEPSPLTYESLLQTLEITPPSPFAEQDFLNMFFEKVYKPIPLVYNLVLAMLWRHPENVELEKVKVVHYCAAGSKPWRYTGEEANMDREDIKMLVDKWWDVYNDESLDFKSKIPADAEETVTKSSILASVLEPEMTYFPAPSAA.

Lysine 104 is an active-site residue. Aspartate 120, aspartate 122, and histidine 258 together coordinate Mn(2+).

The protein belongs to the glycosyltransferase 8 family. Galactosyltransferase subfamily. Requires a divalent metal cation as cofactor.

The protein localises to the cytoplasm. The catalysed reaction is myo-inositol + UDP-alpha-D-galactose = alpha-D-galactosyl-(1-&gt;3)-1D-myo-inositol + UDP + H(+). Galactinol synthase involved in the biosynthesis of raffinose family oligosaccharides (RFOs) that function as osmoprotectants. May promote plant stress tolerance. This chain is Galactinol synthase 4 (GOLS4), found in Arabidopsis thaliana (Mouse-ear cress).